The following is a 208-amino-acid chain: V-type proton ATPase subunit E (208 aa).

This sequence belongs to the V-ATPase E subunit family.

In terms of biological role, produces ATP from ADP in the presence of a proton gradient across the membrane. This Chlamydia trachomatis serovar L2 (strain ATCC VR-902B / DSM 19102 / 434/Bu) protein is V-type proton ATPase subunit E.